The primary structure comprises 283 residues: uncharacterized protein (283 aa).

The 77-residue stretch at Thr-3 to Pro-79 folds into the HTH rpiR-type domain. A DNA-binding region (H-T-H motif) is located at residues Val-39–Lys-58. The SIS domain maps to Ala-123 to Glu-264.

This is an uncharacterized protein from Bacillus subtilis (strain 168).